The following is a 190-amino-acid chain: Putative manganese efflux pump MntP (190 aa).

6 consecutive transmembrane segments (helical) span residues 3–23 (FLQIFLLSIGVAADAFACSVV), 37–57 (LVLAGIFGVFQAAMPLIGWVI), 72–88 (HWIAFALLGVVGAKMIW), 111–131 (IILGLATSIDALAVGMGLAFV), 138–158 (VALSMGLITFALSLVGAWIGH), and 164–184 (FGKWATILGGIILIGIGANIV).

Belongs to the MntP (TC 9.B.29) family.

It localises to the cell membrane. Probably functions as a manganese efflux pump. The chain is Putative manganese efflux pump MntP from Corynebacterium glutamicum (strain R).